Reading from the N-terminus, the 418-residue chain is Probable carboxypeptidase AFLA_000940 (418 aa).

The first 18 residues, 1–18 (MKATDLFHVTVLVAGALA), serve as a signal peptide directing secretion. The N-linked (GlcNAc...) asparagine glycan is linked to asparagine 74. Aspartate 147 serves as a coordination point for Zn(2+). Asparagine 168 carries N-linked (GlcNAc...) asparagine glycosylation. The active-site Proton acceptor is the glutamate 179. Zn(2+) is bound at residue glutamate 180.

The protein belongs to the peptidase M20A family. The cofactor is Zn(2+).

Its subcellular location is the secreted. The chain is Probable carboxypeptidase AFLA_000940 from Aspergillus flavus (strain ATCC 200026 / FGSC A1120 / IAM 13836 / NRRL 3357 / JCM 12722 / SRRC 167).